A 274-amino-acid chain; its full sequence is Aliphatic sulfonates import ATP-binding protein SsuB 2 (274 aa).

In terms of domain architecture, ABC transporter spans 21 to 242 (LALRGVARRF…SRGSARLAAL (222 aa)). 53–60 (GRSGCGKS) serves as a coordination point for ATP.

Belongs to the ABC transporter superfamily. Aliphatic sulfonates importer (TC 3.A.1.17.2) family. In terms of assembly, the complex is composed of two ATP-binding proteins (SsuB), two transmembrane proteins (SsuC) and a solute-binding protein (SsuA).

The protein localises to the cell inner membrane. It carries out the reaction ATP + H2O + aliphatic sulfonate-[sulfonate-binding protein]Side 1 = ADP + phosphate + aliphatic sulfonateSide 2 + [sulfonate-binding protein]Side 1.. Its function is as follows. Part of the ABC transporter complex SsuABC involved in aliphatic sulfonates import. Responsible for energy coupling to the transport system. The polypeptide is Aliphatic sulfonates import ATP-binding protein SsuB 2 (Pseudomonas aeruginosa (strain UCBPP-PA14)).